The sequence spans 1603 residues: Protein TIC 214 (1603 aa).

6 consecutive transmembrane segments (helical) span residues 11 to 31 (VLWASILSWINISSPLILFGL), 58 to 78 (LSGTVAVSGLILGQLIIFLSI), 86 to 106 (LLLKPHTVTLLVLPYLLFYWY), 131 to 151 (IFFDSFIFQLLNPVLLPSPIL), 167 to 187 (LFVLSCFFGWLSGHLFFFNCI), and 213 to 233 (FSIFVLACILLYLGRAPVPFF).

The protein belongs to the TIC214 family. In terms of assembly, part of the Tic complex.

Its subcellular location is the plastid. It localises to the chloroplast inner membrane. Its function is as follows. Involved in protein precursor import into chloroplasts. May be part of an intermediate translocation complex acting as a protein-conducting channel at the inner envelope. This is Protein TIC 214 from Physcomitrium patens (Spreading-leaved earth moss).